The sequence spans 292 residues: Putative phosphatase MPN_381 (292 aa).

Asp11 acts as the Nucleophile in catalysis. A Mg(2+)-binding site is contributed by Asp11. Phosphate is bound at residue Leu12. Asp13 is a Mg(2+) binding site. Residues 60-61 (TG) and Lys217 each bind phosphate. Residue Asp242 coordinates Mg(2+). Asn245 contacts phosphate.

It belongs to the HAD-like hydrolase superfamily. Cof family. Mg(2+) serves as cofactor.

In Mycoplasma pneumoniae (strain ATCC 29342 / M129 / Subtype 1) (Mycoplasmoides pneumoniae), this protein is Putative phosphatase MPN_381.